The chain runs to 440 residues: UDP-N-acetylmuramoylalanine--D-glutamate ligase (440 aa).

113–119 contributes to the ATP binding site; it reads GTNGKST.

It belongs to the MurCDEF family.

The protein localises to the cytoplasm. It catalyses the reaction UDP-N-acetyl-alpha-D-muramoyl-L-alanine + D-glutamate + ATP = UDP-N-acetyl-alpha-D-muramoyl-L-alanyl-D-glutamate + ADP + phosphate + H(+). It participates in cell wall biogenesis; peptidoglycan biosynthesis. Its function is as follows. Cell wall formation. Catalyzes the addition of glutamate to the nucleotide precursor UDP-N-acetylmuramoyl-L-alanine (UMA). The polypeptide is UDP-N-acetylmuramoylalanine--D-glutamate ligase (Buchnera aphidicola subsp. Acyrthosiphon pisum (strain Tuc7)).